The primary structure comprises 155 residues: Small ribosomal subunit protein uS7c (155 aa).

It belongs to the universal ribosomal protein uS7 family. Part of the 30S ribosomal subunit.

It is found in the plastid. The protein resides in the chloroplast. Functionally, one of the primary rRNA binding proteins, it binds directly to 16S rRNA where it nucleates assembly of the head domain of the 30S subunit. This chain is Small ribosomal subunit protein uS7c (rps7), found in Saruma henryi (Upright wild ginger).